Consider the following 363-residue polypeptide: Somatostatin receptor type 5 (363 aa).

Topologically, residues 1–35 (MEPLSLASTPSWNASAASSGNHNWSLVGSASPMGA) are extracellular. Asn-13 and Asn-23 each carry an N-linked (GlcNAc...) asparagine glycan. The helical transmembrane segment at 36–63 (RAVLVPVLYLLVCTVGLSGNTLVIYVVL) threads the bilayer. Over 64 to 73 (RHAKMKTVTN) the chain is Cytoplasmic. A helical transmembrane segment spans residues 74–99 (VYILNLAVADVLFMLGLPFLATQNAV). At 100-111 (VSYWPFGSFLCR) the chain is on the extracellular side. Cys-110 and Cys-185 are joined by a disulfide. The chain crosses the membrane as a helical span at residues 112 to 133 (LVMTLDGINQFTSIFCLMVMSV). Over 134–155 (DRYLAVVHPLRSARWRRPRVAK) the chain is Cytoplasmic. Residues 156–176 (MASAAVWVFSLLMSLPLLVFA) traverse the membrane as a helical segment. Residues 177-196 (DVQEGWGTCNLSWPEPVGLW) are Extracellular-facing. N-linked (GlcNAc...) asparagine glycosylation occurs at Asn-186. The chain crosses the membrane as a helical span at residues 197-221 (GAAFITYTSVLGFFGPLLVICLCYL). The Cytoplasmic segment spans residues 222–247 (LIVVKVKAAGMRVGSSRRRRSEPKVT). A helical membrane pass occupies residues 248-273 (RMVVVVVLVFVGCWLPFFIVNIVNLA). Over 274-283 (FTLPEEPTSA) the chain is Extracellular. Residues 284–308 (GLYFFVVVLSYANSCANPLLYGFLS) traverse the membrane as a helical segment. Residues 309–363 (DNFRQSFRKVLCLRRGYGMEDADAIEPRPDKSGRPQATLPTRSCEANGLMQTSRI) are Cytoplasmic-facing. Cys-320 carries the S-palmitoyl cysteine; by ZDHHC5 lipid modification. The segment at 331–363 (DAIEPRPDKSGRPQATLPTRSCEANGLMQTSRI) is disordered.

It belongs to the G-protein coupled receptor 1 family. Heterodimer with SSTR2. Heterodimerization with SSTR2 increases cell growth inhibition activity of SSTR2. In terms of processing, palmitoylated at Cys-320 by ZDHHC5, but not ZDHHC8. Palmitoylation creates an additional intracellular loop which is thought to be important for efficient coupling to G-proteins and may target the protein to lipid rafts. In terms of tissue distribution, prominent in the pituitary and small intestine. Low levels in islets and spleen. Not detected in kidney, pancreas, cerebellum, or cortex.

The protein localises to the cell membrane. Functionally, receptor for somatostatin-28. The activity of this receptor is mediated by G proteins which inhibit adenylyl cyclase. Increases cell growth inhibition activity of SSTR2 following heterodimerization. The chain is Somatostatin receptor type 5 (Sstr5) from Rattus norvegicus (Rat).